Consider the following 84-residue polypeptide: Delta-thalatoxin-Tas1a (84 aa).

The signal sequence occupies residues 1 to 19 (MAYLKIVLVALMLVLAVSA). Positions 20-33 (MRRPDQQDQDISVA) are excised as a propeptide. Cystine bridges form between C38–C78, C40–C68, and C61–C79.

The protein belongs to the sea anemone sodium channel inhibitory toxin family. Type II subfamily.

It localises to the secreted. It is found in the nematocyst. Binds specifically to the voltage-gated sodium channel (Nav) and delays its inactivation. This chain is Delta-thalatoxin-Tas1a, found in Thalassianthus aster (Fuzzy-tipped anemone).